A 48-amino-acid polypeptide reads, in one-letter code: Large ribosomal subunit protein bL33A (48 aa).

Belongs to the bacterial ribosomal protein bL33 family.

This is Large ribosomal subunit protein bL33A from Streptococcus pyogenes serotype M28 (strain MGAS6180).